The sequence spans 152 residues: SsrA-binding protein (152 aa).

Basic and acidic residues predominate over residues 129–140; the sequence is KREDMKKKDSQR. The disordered stretch occupies residues 129–152; it reads KREDMKKKDSQRELSQALKSKNRE. The segment covering 141–152 has biased composition (polar residues); the sequence is ELSQALKSKNRE.

The protein belongs to the SmpB family.

It localises to the cytoplasm. Its function is as follows. Required for rescue of stalled ribosomes mediated by trans-translation. Binds to transfer-messenger RNA (tmRNA), required for stable association of tmRNA with ribosomes. tmRNA and SmpB together mimic tRNA shape, replacing the anticodon stem-loop with SmpB. tmRNA is encoded by the ssrA gene; the 2 termini fold to resemble tRNA(Ala) and it encodes a 'tag peptide', a short internal open reading frame. During trans-translation Ala-aminoacylated tmRNA acts like a tRNA, entering the A-site of stalled ribosomes, displacing the stalled mRNA. The ribosome then switches to translate the ORF on the tmRNA; the nascent peptide is terminated with the 'tag peptide' encoded by the tmRNA and targeted for degradation. The ribosome is freed to recommence translation, which seems to be the essential function of trans-translation. The polypeptide is SsrA-binding protein (Pelobacter propionicus (strain DSM 2379 / NBRC 103807 / OttBd1)).